A 224-amino-acid chain; its full sequence is Protein DEHYDRATION-INDUCED 19 homolog 4 (224 aa).

Residues 1–12 show a composition bias toward polar residues; it reads MDSNWINCPSVF. The tract at residues 1–23 is disordered; sequence MDSNWINCPSVFSSSSSSSRRCQ. Positions 13–23 are enriched in low complexity; that stretch reads SSSSSSSRRCQ. Position 117 is a phosphothreonine (threonine 117).

This sequence belongs to the Di19 family. Phosphorylated in vitro by CPK3 or CPK11. Expressed in seedlings, roots, leaves, stems, flowers and siliques.

It localises to the cytoplasm. Its subcellular location is the perinuclear region. In Arabidopsis thaliana (Mouse-ear cress), this protein is Protein DEHYDRATION-INDUCED 19 homolog 4 (DI19-4).